A 173-amino-acid chain; its full sequence is Co-chaperone protein HscB homolog (173 aa).

The 73-residue stretch at 5-77 folds into the J domain; it reads CHFALFELQP…PKRARYLLAM (73 aa).

It belongs to the HscB family. In terms of assembly, interacts with HscA and stimulates its ATPase activity.

In terms of biological role, co-chaperone involved in the maturation of iron-sulfur cluster-containing proteins. Seems to help targeting proteins to be folded toward HscA. The polypeptide is Co-chaperone protein HscB homolog (Pseudomonas fluorescens (strain SBW25)).